The chain runs to 191 residues: Glycerol-3-phosphate acyltransferase (191 aa).

Helical transmembrane passes span 5 to 25 (IILI…IAKI), 51 to 71 (LAVL…YTAQ), 78 to 98 (DLYI…PIWL), 114 to 134 (IALN…VFFI), and 153 to 173 (SFFF…LIFL).

This sequence belongs to the PlsY family. In terms of assembly, probably interacts with PlsX.

The protein resides in the cell membrane. It catalyses the reaction an acyl phosphate + sn-glycerol 3-phosphate = a 1-acyl-sn-glycero-3-phosphate + phosphate. Its pathway is lipid metabolism; phospholipid metabolism. Its function is as follows. Catalyzes the transfer of an acyl group from acyl-phosphate (acyl-PO(4)) to glycerol-3-phosphate (G3P) to form lysophosphatidic acid (LPA). This enzyme utilizes acyl-phosphate as fatty acyl donor, but not acyl-CoA or acyl-ACP. This is Glycerol-3-phosphate acyltransferase from Wolbachia pipientis subsp. Culex pipiens (strain wPip).